Here is a 333-residue protein sequence, read N- to C-terminus: Glycerol-3-phosphate dehydrogenase [NAD(P)+] (333 aa).

The NADPH site is built by S10, F11, R31, and K105. Residues K105, G136, and S138 each contribute to the sn-glycerol 3-phosphate site. An NADPH-binding site is contributed by A140. Sn-glycerol 3-phosphate-binding residues include K191, D244, S254, R255, and N256. The active-site Proton acceptor is K191. R255 serves as a coordination point for NADPH. Residues V279 and E281 each contribute to the NADPH site.

Belongs to the NAD-dependent glycerol-3-phosphate dehydrogenase family.

It is found in the cytoplasm. It carries out the reaction sn-glycerol 3-phosphate + NAD(+) = dihydroxyacetone phosphate + NADH + H(+). The enzyme catalyses sn-glycerol 3-phosphate + NADP(+) = dihydroxyacetone phosphate + NADPH + H(+). It participates in membrane lipid metabolism; glycerophospholipid metabolism. Catalyzes the reduction of the glycolytic intermediate dihydroxyacetone phosphate (DHAP) to sn-glycerol 3-phosphate (G3P), the key precursor for phospholipid synthesis. This chain is Glycerol-3-phosphate dehydrogenase [NAD(P)+], found in Leptospira biflexa serovar Patoc (strain Patoc 1 / Ames).